Here is a 457-residue protein sequence, read N- to C-terminus: Argininosuccinate lyase (457 aa).

Belongs to the lyase 1 family. Argininosuccinate lyase subfamily.

Its subcellular location is the cytoplasm. It catalyses the reaction 2-(N(omega)-L-arginino)succinate = fumarate + L-arginine. The protein operates within amino-acid biosynthesis; L-arginine biosynthesis; L-arginine from L-ornithine and carbamoyl phosphate: step 3/3. This is Argininosuccinate lyase from Escherichia coli O1:K1 / APEC.